A 326-amino-acid chain; its full sequence is Glyoxylate/hydroxypyruvate reductase B (326 aa).

Catalysis depends on residues arginine 237 and glutamate 266. Histidine 285 serves as the catalytic Proton donor.

It belongs to the D-isomer specific 2-hydroxyacid dehydrogenase family. GhrB subfamily. As to quaternary structure, homodimer.

The protein resides in the cytoplasm. The catalysed reaction is glycolate + NADP(+) = glyoxylate + NADPH + H(+). It catalyses the reaction (R)-glycerate + NAD(+) = 3-hydroxypyruvate + NADH + H(+). It carries out the reaction (R)-glycerate + NADP(+) = 3-hydroxypyruvate + NADPH + H(+). In terms of biological role, catalyzes the NADPH-dependent reduction of glyoxylate and hydroxypyruvate into glycolate and glycerate, respectively. The polypeptide is Glyoxylate/hydroxypyruvate reductase B (Yersinia pseudotuberculosis serotype O:3 (strain YPIII)).